The following is a 225-amino-acid chain: DNA repair and recombination protein RadB (225 aa).

It belongs to the eukaryotic RecA-like protein family. RadB subfamily.

In terms of biological role, involved in DNA repair and in homologous recombination. May regulate the cleavage reactions of the branch-structured DNA. Has a very weak ATPase activity that is not stimulated by DNA. Binds DNA but does not promote DNA strands exchange. The polypeptide is DNA repair and recombination protein RadB (Methanococcoides burtonii (strain DSM 6242 / NBRC 107633 / OCM 468 / ACE-M)).